The chain runs to 940 residues: Chordin (940 aa).

The first 19 residues, 1 to 19 (MMEGLLWILLSVIIASVHG), serve as a signal peptide directing secretion. Residues 42 to 118 (SGCSFGGRFY…LPGHCCKTCP (77 aa)) form the VWFC 1 domain. 4 CHRD domains span residues 162-277 (TTTD…KHRA), 279-398 (FAET…GRRS), 404-519 (SVLS…LLPY), and 525-652 (RRNE…VPNH). N347 and N430 each carry an N-linked (GlcNAc...) asparagine glycan. VWFC domains follow at residues 689 to 748 (HSCF…PICE), 767 to 836 (EGCY…KECP), and 855 to 919 (RLCK…PECI).

Belongs to the chordin family. In terms of assembly, interacts with twsg1 and/or bmp4. Cleaved by tolloid proteases; cleavage participates in dorsoventral patterning during early development.

It localises to the secreted. In terms of biological role, dorsalizing factor. Key developmental protein that dorsalizes early vertebrate embryonic tissues by binding to ventralizing TGF-beta family bone morphogenetic proteins (BMPs) and sequestering them in latent complexes. The polypeptide is Chordin (chd) (Danio rerio (Zebrafish)).